A 376-amino-acid chain; its full sequence is Heterodimeric geranylgeranyl pyrophosphate synthase large subunit 2 (376 aa).

An N-terminal signal peptide occupies residues 1-24 (MEPQILFLYLSLFILSLNFFFTNL). Isopentenyl diphosphate-binding residues include Lys-125, Arg-128, and His-157. Residues Asp-164 and Asp-170 each coordinate Mg(2+). Residue Arg-175 coordinates dimethylallyl diphosphate. Arg-176 is a binding site for isopentenyl diphosphate. Dimethylallyl diphosphate is bound by residues Lys-261, Thr-262, Gln-299, Lys-316, and Lys-326.

This sequence belongs to the FPP/GGPP synthase family. Monomer. Part of a heterodimeric geranyl(geranyl)diphosphate synthase. Interacts with GGR. The cofactor is Mg(2+). Mainly expressed in flowers.

It localises to the endoplasmic reticulum. It carries out the reaction isopentenyl diphosphate + dimethylallyl diphosphate = (2E)-geranyl diphosphate + diphosphate. It catalyses the reaction isopentenyl diphosphate + (2E)-geranyl diphosphate = (2E,6E)-farnesyl diphosphate + diphosphate. The enzyme catalyses isopentenyl diphosphate + (2E,6E)-farnesyl diphosphate = (2E,6E,10E)-geranylgeranyl diphosphate + diphosphate. Its pathway is isoprenoid biosynthesis; farnesyl diphosphate biosynthesis; farnesyl diphosphate from geranyl diphosphate and isopentenyl diphosphate: step 1/1. It participates in isoprenoid biosynthesis; geranyl diphosphate biosynthesis; geranyl diphosphate from dimethylallyl diphosphate and isopentenyl diphosphate: step 1/1. The protein operates within isoprenoid biosynthesis; geranylgeranyl diphosphate biosynthesis; geranylgeranyl diphosphate from farnesyl diphosphate and isopentenyl diphosphate: step 1/1. In terms of biological role, heterodimeric geranyl(geranyl)-diphosphate (GPP) synthase large subunit. In vitro, the large subunit catalyzes mainly the trans-addition of the three molecules of IPP onto DMAPP to form geranylgeranyl pyrophosphate while the small subunit alone is inactive. Upon association of the two subunits, the product profile is not changed. The polypeptide is Heterodimeric geranylgeranyl pyrophosphate synthase large subunit 2 (GGPPS2) (Arabidopsis thaliana (Mouse-ear cress)).